The chain runs to 136 residues: Small ribosomal subunit protein uS11 (136 aa).

Disordered stretches follow at residues 1–20 (MAQRRSSQTTKKVKRKNVTN) and 115–136 (VTPQAHNGTRPPKRVLKREKAR). Residues 125 to 136 (PPKRVLKREKAR) show a composition bias toward basic residues.

The protein belongs to the universal ribosomal protein uS11 family. Part of the 30S ribosomal subunit. Interacts with proteins S7 and S18. Binds to IF-3.

Functionally, located on the platform of the 30S subunit, it bridges several disparate RNA helices of the 16S rRNA. Forms part of the Shine-Dalgarno cleft in the 70S ribosome. The protein is Small ribosomal subunit protein uS11 of Mycoplasmopsis pulmonis (strain UAB CTIP) (Mycoplasma pulmonis).